Reading from the N-terminus, the 177-residue chain is Cytochrome c oxidase assembly protein CtaG (177 aa).

At 1 to 8 the chain is on the cytoplasmic side; the sequence is MTQKAKNT. A helical; Signal-anchor for type II membrane protein membrane pass occupies residues 9–29; sequence IYLLILIILSMLCLVYASVPL. Topologically, residues 30–177 are periplasmic; that stretch reads YSIFCKVTGY…TFFKYKETTK (148 aa).

Belongs to the COX11/CtaG family.

The protein resides in the cell inner membrane. Exerts its effect at some terminal stage of cytochrome c oxidase synthesis, probably by being involved in the insertion of the copper B into subunit I. This is Cytochrome c oxidase assembly protein CtaG from Ehrlichia ruminantium (strain Gardel).